The following is a 185-amino-acid chain: Ribosome maturation factor RimM (185 aa).

The PRC barrel domain maps to 106 to 185 (TGDYYWKDLI…TIEVDWDPGF (80 aa)).

It belongs to the RimM family. In terms of assembly, binds ribosomal protein uS19.

It localises to the cytoplasm. Its function is as follows. An accessory protein needed during the final step in the assembly of 30S ribosomal subunit, possibly for assembly of the head region. Essential for efficient processing of 16S rRNA. May be needed both before and after RbfA during the maturation of 16S rRNA. It has affinity for free ribosomal 30S subunits but not for 70S ribosomes. The polypeptide is Ribosome maturation factor RimM (Photorhabdus laumondii subsp. laumondii (strain DSM 15139 / CIP 105565 / TT01) (Photorhabdus luminescens subsp. laumondii)).